We begin with the raw amino-acid sequence, 281 residues long: Phosphoglycerate mutase-like protein AT74H (281 aa).

His17 functions as the Tele-phosphohistidine intermediate in the catalytic mechanism. The active-site Proton donor/acceptor is the Glu109.

Belongs to the phosphoglycerate mutase family.

Functionally, may play a role in carbohydrates metabolism. This chain is Phosphoglycerate mutase-like protein AT74H, found in Arabidopsis thaliana (Mouse-ear cress).